The following is a 60-amino-acid chain: Large ribosomal subunit protein uL30 (60 aa).

Belongs to the universal ribosomal protein uL30 family. Part of the 50S ribosomal subunit.

The chain is Large ribosomal subunit protein uL30 from Leifsonia xyli subsp. xyli (strain CTCB07).